The following is a 329-amino-acid chain: GMP reductase (329 aa).

The Thioimidate intermediate role is filled by C178. 207–230 serves as a coordination point for NADP(+); it reads IIADGGIRNNGDIAKSIRFGATMC.

This sequence belongs to the IMPDH/GMPR family. GuaC type 2 subfamily.

The catalysed reaction is IMP + NH4(+) + NADP(+) = GMP + NADPH + 2 H(+). In terms of biological role, catalyzes the irreversible NADPH-dependent deamination of GMP to IMP. It functions in the conversion of nucleobase, nucleoside and nucleotide derivatives of G to A nucleotides, and in maintaining the intracellular balance of A and G nucleotides. The polypeptide is GMP reductase (Lacticaseibacillus casei (strain BL23) (Lactobacillus casei)).